Reading from the N-terminus, the 77-residue chain is Structural DNA-binding protein p10 (77 aa).

Residues 1–12 (MPTKAGTKSTAN) are compositionally biased toward polar residues. The tract at residues 1–38 (MPTKAGTKSTANKKTTKGPSKSGSAKGHTGKTHATALH) is disordered. Low complexity predominate over residues 17 to 27 (KGPSKSGSAKG).

Belongs to the asfivirus P10 family.

It localises to the virion. In terms of biological role, may play a role in genome packaging through direct interaction with viral DNA. Binds to ssDNA and dsDNA with the same apparent affinity in vitro. The chain is Structural DNA-binding protein p10 from Ornithodoros (relapsing fever ticks).